Here is a 460-residue protein sequence, read N- to C-terminus: Cysteine--tRNA ligase (460 aa).

Cys-27 lines the Zn(2+) pocket. The 'HIGH' region signature appears at 29 to 39 (PTVYDLIHVGN). The Zn(2+) site is built by Cys-207, His-232, and Glu-236. Residues 264-268 (KMSKS) carry the 'KMSKS' region motif. Lys-267 contributes to the ATP binding site.

This sequence belongs to the class-I aminoacyl-tRNA synthetase family. In terms of assembly, monomer. Requires Zn(2+) as cofactor.

It localises to the cytoplasm. It carries out the reaction tRNA(Cys) + L-cysteine + ATP = L-cysteinyl-tRNA(Cys) + AMP + diphosphate. The chain is Cysteine--tRNA ligase from Thermotoga petrophila (strain ATCC BAA-488 / DSM 13995 / JCM 10881 / RKU-1).